The chain runs to 377 residues: Multiple sugar-binding transport ATP-binding protein MsmK (377 aa).

The ABC transporter domain maps to 4 to 246 (LNLNHIYKKY…PANKFVAGFI (243 aa)). Residue 38–45 (GPSGCGKS) participates in ATP binding.

The protein belongs to the ABC transporter superfamily.

Its subcellular location is the cell membrane. Involved in a binding protein-dependent transport system responsible for the uptake of melibiose, raffinose and isomaltotriose. Probably responsible for energy coupling to the transport system. This chain is Multiple sugar-binding transport ATP-binding protein MsmK (msmK), found in Streptococcus mutans serotype c (strain ATCC 700610 / UA159).